Here is a 138-residue protein sequence, read N- to C-terminus: Putative pre-16S rRNA nuclease (138 aa).

The protein belongs to the YqgF nuclease family.

The protein resides in the cytoplasm. Functionally, could be a nuclease involved in processing of the 5'-end of pre-16S rRNA. This Escherichia coli O7:K1 (strain IAI39 / ExPEC) protein is Putative pre-16S rRNA nuclease.